Here is a 119-residue protein sequence, read N- to C-terminus: Large ribosomal subunit protein bL19 (119 aa).

It belongs to the bacterial ribosomal protein bL19 family.

Its function is as follows. This protein is located at the 30S-50S ribosomal subunit interface and may play a role in the structure and function of the aminoacyl-tRNA binding site. In Leuconostoc mesenteroides subsp. mesenteroides (strain ATCC 8293 / DSM 20343 / BCRC 11652 / CCM 1803 / JCM 6124 / NCDO 523 / NBRC 100496 / NCIMB 8023 / NCTC 12954 / NRRL B-1118 / 37Y), this protein is Large ribosomal subunit protein bL19.